The following is a 319-amino-acid chain: 4-hydroxy-3-methylbut-2-enyl diphosphate reductase (319 aa).

Residue cysteine 15 participates in [4Fe-4S] cluster binding. Positions 44 and 77 each coordinate (2E)-4-hydroxy-3-methylbut-2-enyl diphosphate. Dimethylallyl diphosphate is bound by residues histidine 44 and histidine 77. Residues histidine 44 and histidine 77 each contribute to the isopentenyl diphosphate site. Cysteine 99 contacts [4Fe-4S] cluster. A (2E)-4-hydroxy-3-methylbut-2-enyl diphosphate-binding site is contributed by histidine 127. Histidine 127 is a binding site for dimethylallyl diphosphate. Histidine 127 is a binding site for isopentenyl diphosphate. Residue glutamate 129 is the Proton donor of the active site. Threonine 172 provides a ligand contact to (2E)-4-hydroxy-3-methylbut-2-enyl diphosphate. Cysteine 202 serves as a coordination point for [4Fe-4S] cluster. (2E)-4-hydroxy-3-methylbut-2-enyl diphosphate-binding residues include serine 230, serine 231, asparagine 232, and serine 274. Serine 230, serine 231, asparagine 232, and serine 274 together coordinate dimethylallyl diphosphate. Serine 230, serine 231, asparagine 232, and serine 274 together coordinate isopentenyl diphosphate.

This sequence belongs to the IspH family. The cofactor is [4Fe-4S] cluster.

It carries out the reaction isopentenyl diphosphate + 2 oxidized [2Fe-2S]-[ferredoxin] + H2O = (2E)-4-hydroxy-3-methylbut-2-enyl diphosphate + 2 reduced [2Fe-2S]-[ferredoxin] + 2 H(+). It catalyses the reaction dimethylallyl diphosphate + 2 oxidized [2Fe-2S]-[ferredoxin] + H2O = (2E)-4-hydroxy-3-methylbut-2-enyl diphosphate + 2 reduced [2Fe-2S]-[ferredoxin] + 2 H(+). It participates in isoprenoid biosynthesis; dimethylallyl diphosphate biosynthesis; dimethylallyl diphosphate from (2E)-4-hydroxy-3-methylbutenyl diphosphate: step 1/1. The protein operates within isoprenoid biosynthesis; isopentenyl diphosphate biosynthesis via DXP pathway; isopentenyl diphosphate from 1-deoxy-D-xylulose 5-phosphate: step 6/6. Catalyzes the conversion of 1-hydroxy-2-methyl-2-(E)-butenyl 4-diphosphate (HMBPP) into a mixture of isopentenyl diphosphate (IPP) and dimethylallyl diphosphate (DMAPP). Acts in the terminal step of the DOXP/MEP pathway for isoprenoid precursor biosynthesis. This is 4-hydroxy-3-methylbut-2-enyl diphosphate reductase from Xanthomonas euvesicatoria pv. vesicatoria (strain 85-10) (Xanthomonas campestris pv. vesicatoria).